The primary structure comprises 1196 residues: Chromosome partition protein Smc (1196 aa).

32-39 (PNGSGKSN) contacts ATP. Coiled coils occupy residues 168 to 288 (LKHR…SVQQ) and 327 to 497 (DALE…LERK). Positions 510-621 (AGILGPMAKL…VDDLDRALAL (112 aa)) constitute an SMC hinge domain. 2 coiled-coil regions span residues 654 to 829 (LEVT…RAQQ) and 972 to 1026 (DRPT…KDLL).

Belongs to the SMC family. Homodimer.

The protein resides in the cytoplasm. Required for chromosome condensation and partitioning. The sequence is that of Chromosome partition protein Smc from Mycolicibacterium paratuberculosis (strain ATCC BAA-968 / K-10) (Mycobacterium paratuberculosis).